We begin with the raw amino-acid sequence, 230 residues long: ATP phosphoribosyltransferase (230 aa).

This sequence belongs to the ATP phosphoribosyltransferase family. Short subfamily. As to quaternary structure, heteromultimer composed of HisG and HisZ subunits.

It localises to the cytoplasm. The catalysed reaction is 1-(5-phospho-beta-D-ribosyl)-ATP + diphosphate = 5-phospho-alpha-D-ribose 1-diphosphate + ATP. It functions in the pathway amino-acid biosynthesis; L-histidine biosynthesis; L-histidine from 5-phospho-alpha-D-ribose 1-diphosphate: step 1/9. Functionally, catalyzes the condensation of ATP and 5-phosphoribose 1-diphosphate to form N'-(5'-phosphoribosyl)-ATP (PR-ATP). Has a crucial role in the pathway because the rate of histidine biosynthesis seems to be controlled primarily by regulation of HisG enzymatic activity. The sequence is that of ATP phosphoribosyltransferase from Agrobacterium fabrum (strain C58 / ATCC 33970) (Agrobacterium tumefaciens (strain C58)).